The following is a 148-amino-acid chain: Tetratricopeptide repeat protein 32 (148 aa).

TPR repeat units lie at residues 12-45, 55-88, and 89-122; these read SSAA…CARH, ATAY…LPSF, and EVPY…NPGF.

This Mus musculus (Mouse) protein is Tetratricopeptide repeat protein 32 (Ttc32).